Reading from the N-terminus, the 119-residue chain is UPF0102 protein Nmul_A0195 (119 aa).

This sequence belongs to the UPF0102 family.

This chain is UPF0102 protein Nmul_A0195, found in Nitrosospira multiformis (strain ATCC 25196 / NCIMB 11849 / C 71).